The following is a 70-amino-acid chain: Putative RNA-binding protein YbcJ (70 aa).

The region spanning 12–68 (VELCDLLKLEGWSESGAQAKIAIAEGQVKVDGAVETRKRCKIVAGQTVSFAGHSVQV) is the S4 RNA-binding domain.

In terms of assembly, in pull-down experiments interacts with CedA.

Its function is as follows. Its structure and the presence of conserved basic residues indicates that it probably binds RNA. The sequence is that of Putative RNA-binding protein YbcJ (ybcJ) from Escherichia coli (strain K12).